We begin with the raw amino-acid sequence, 403 residues long: 4-hydroxy-3-methylbut-2-enyl diphosphate reductase (403 aa).

C66 serves as a coordination point for [4Fe-4S] cluster. (2E)-4-hydroxy-3-methylbut-2-enyl diphosphate is bound at residue H96. H96 provides a ligand contact to dimethylallyl diphosphate. Position 96 (H96) interacts with isopentenyl diphosphate. C157 lines the [4Fe-4S] cluster pocket. A (2E)-4-hydroxy-3-methylbut-2-enyl diphosphate-binding site is contributed by H185. Residue H185 participates in dimethylallyl diphosphate binding. H185 serves as a coordination point for isopentenyl diphosphate. The active-site Proton donor is the E187. (2E)-4-hydroxy-3-methylbut-2-enyl diphosphate is bound at residue T250. [4Fe-4S] cluster is bound at residue C288. Positions 317, 318, 319, and 379 each coordinate (2E)-4-hydroxy-3-methylbut-2-enyl diphosphate. Residues S317, S318, N319, and S379 each coordinate dimethylallyl diphosphate. Positions 317, 318, 319, and 379 each coordinate isopentenyl diphosphate.

This sequence belongs to the IspH family. The cofactor is [4Fe-4S] cluster.

It carries out the reaction isopentenyl diphosphate + 2 oxidized [2Fe-2S]-[ferredoxin] + H2O = (2E)-4-hydroxy-3-methylbut-2-enyl diphosphate + 2 reduced [2Fe-2S]-[ferredoxin] + 2 H(+). It catalyses the reaction dimethylallyl diphosphate + 2 oxidized [2Fe-2S]-[ferredoxin] + H2O = (2E)-4-hydroxy-3-methylbut-2-enyl diphosphate + 2 reduced [2Fe-2S]-[ferredoxin] + 2 H(+). Its pathway is isoprenoid biosynthesis; dimethylallyl diphosphate biosynthesis; dimethylallyl diphosphate from (2E)-4-hydroxy-3-methylbutenyl diphosphate: step 1/1. It participates in isoprenoid biosynthesis; isopentenyl diphosphate biosynthesis via DXP pathway; isopentenyl diphosphate from 1-deoxy-D-xylulose 5-phosphate: step 6/6. Functionally, catalyzes the conversion of 1-hydroxy-2-methyl-2-(E)-butenyl 4-diphosphate (HMBPP) into a mixture of isopentenyl diphosphate (IPP) and dimethylallyl diphosphate (DMAPP). Acts in the terminal step of the DOXP/MEP pathway for isoprenoid precursor biosynthesis. The polypeptide is 4-hydroxy-3-methylbut-2-enyl diphosphate reductase (Picosynechococcus sp. (strain ATCC 27264 / PCC 7002 / PR-6) (Agmenellum quadruplicatum)).